The chain runs to 305 residues: Glycine--tRNA ligase alpha subunit (305 aa).

The protein belongs to the class-II aminoacyl-tRNA synthetase family. Tetramer of two alpha and two beta subunits.

It localises to the cytoplasm. It catalyses the reaction tRNA(Gly) + glycine + ATP = glycyl-tRNA(Gly) + AMP + diphosphate. In Streptococcus gordonii (strain Challis / ATCC 35105 / BCRC 15272 / CH1 / DL1 / V288), this protein is Glycine--tRNA ligase alpha subunit.